Reading from the N-terminus, the 236-residue chain is Protein-S-isoprenylcysteine O-methyltransferase (236 aa).

The next 4 membrane-spanning stretches (helical) occupy residues 3 to 23, 24 to 44, 76 to 96, and 108 to 128; these read NLHT…LGCV, FGLG…FFAF, AYWL…GKSF, and FLIN…LCLG. Residues 155-158, tyrosine 163, and 168-171 each bind S-adenosyl-L-methionine; these read HLLV and HPSY. Residues 174–194 traverse the membrane as a helical segment; sequence FFIWALGTQMLLGNFVSTLLF. Arginine 205 serves as a coordination point for substrate. S-adenosyl-L-methionine is bound at residue glutamate 209.

This sequence belongs to the class VI-like SAM-binding methyltransferase superfamily. Isoprenylcysteine carboxyl methyltransferase family.

Its subcellular location is the membrane. It carries out the reaction [protein]-C-terminal S-[(2E,6E)-farnesyl]-L-cysteine + S-adenosyl-L-methionine = [protein]-C-terminal S-[(2E,6E)-farnesyl]-L-cysteine methyl ester + S-adenosyl-L-homocysteine. In terms of biological role, mediates C-terminal methylation of the isoprenylated C-terminal cysteine in M-factor. This chain is Protein-S-isoprenylcysteine O-methyltransferase (mam4), found in Schizosaccharomyces pombe (strain 972 / ATCC 24843) (Fission yeast).